The primary structure comprises 361 residues: Histidinol-phosphate aminotransferase (361 aa).

Lysine 224 carries the post-translational modification N6-(pyridoxal phosphate)lysine.

Belongs to the class-II pyridoxal-phosphate-dependent aminotransferase family. Histidinol-phosphate aminotransferase subfamily. As to quaternary structure, homodimer. Pyridoxal 5'-phosphate serves as cofactor.

The enzyme catalyses L-histidinol phosphate + 2-oxoglutarate = 3-(imidazol-4-yl)-2-oxopropyl phosphate + L-glutamate. Its pathway is amino-acid biosynthesis; L-histidine biosynthesis; L-histidine from 5-phospho-alpha-D-ribose 1-diphosphate: step 7/9. This Bacillus licheniformis (strain ATCC 14580 / DSM 13 / JCM 2505 / CCUG 7422 / NBRC 12200 / NCIMB 9375 / NCTC 10341 / NRRL NRS-1264 / Gibson 46) protein is Histidinol-phosphate aminotransferase.